The primary structure comprises 384 residues: MSMSFSFQVEATQGAARAGRMITPHGEVETPVFMPVGTVATVKGIPQDLLEELGVQILLNNTYHLYLRPGVEQIRKLGGTHKFMSWDRSILTDSGGFQVFSLSELRKVTEEGVSFRSHLDGSSHLFSPESAMASQIGIGADIIMAFDECTEYPAERTRTERSMELTLRWAERSKNAFEAHKHEVPWFAERGKKSQALFGIVQGGMFPNLRKESAERTVEIGFPGYALGGFSVGEPREKTAELVANTVPLLPENKPRYLMGVGYPEEIVQYARMGIDMMDCVLPTRAARHGLLFTSEGRLTIKNQRFASDEGPLDPNCSCKVCKRYSRAYLRHLYASNEVLAQVLNTTHNLSYYLDTMRRVRQAIILGENSVSLPVVRSPHLSAT.

The Proton acceptor role is filled by Asp-93. Substrate-binding positions include 93 to 97, Asp-147, Gln-202, and Gly-229; that span reads DSGGF. The RNA binding stretch occupies residues 260–266; that stretch reads GVGYPEE. Residue Asp-279 is the Nucleophile of the active site. An RNA binding; important for wobble base 34 recognition region spans residues 284–288; sequence TRAAR. The Zn(2+) site is built by Cys-317, Cys-319, Cys-322, and His-348.

It belongs to the queuine tRNA-ribosyltransferase family. Homodimer. Within each dimer, one monomer is responsible for RNA recognition and catalysis, while the other monomer binds to the replacement base PreQ1. It depends on Zn(2+) as a cofactor.

It catalyses the reaction 7-aminomethyl-7-carbaguanine + guanosine(34) in tRNA = 7-aminomethyl-7-carbaguanosine(34) in tRNA + guanine. It participates in tRNA modification; tRNA-queuosine biosynthesis. Its function is as follows. Catalyzes the base-exchange of a guanine (G) residue with the queuine precursor 7-aminomethyl-7-deazaguanine (PreQ1) at position 34 (anticodon wobble position) in tRNAs with GU(N) anticodons (tRNA-Asp, -Asn, -His and -Tyr). Catalysis occurs through a double-displacement mechanism. The nucleophile active site attacks the C1' of nucleotide 34 to detach the guanine base from the RNA, forming a covalent enzyme-RNA intermediate. The proton acceptor active site deprotonates the incoming PreQ1, allowing a nucleophilic attack on the C1' of the ribose to form the product. After dissociation, two additional enzymatic reactions on the tRNA convert PreQ1 to queuine (Q), resulting in the hypermodified nucleoside queuosine (7-(((4,5-cis-dihydroxy-2-cyclopenten-1-yl)amino)methyl)-7-deazaguanosine). In Koribacter versatilis (strain Ellin345), this protein is Queuine tRNA-ribosyltransferase.